The chain runs to 418 residues: Pigment epithelium-derived factor (418 aa).

The signal sequence occupies residues 1–19 (MQALVLLLCIGALLGHSSC). Position 20 is a pyrrolidone carboxylic acid (Gln-20). Positions 20–39 (QNPASPPEEGSPDPDSTGAL) are disordered. Residues Ser-24 and Ser-114 each carry the phosphoserine; by CK2 modification. Ser-227 carries the phosphoserine; by PKA modification. An N-linked (GlcNAc...) (complex) asparagine glycan is attached at Asn-285. An O-glycosylated at one site region spans residues 371-383 (TTPSPGLQPAHLT).

It belongs to the serpin family. As to quaternary structure, interacts with PNPLA2; this interaction stimulates the phospholipase A2 activity of PNPLA2. The N-terminus is blocked. Extracellular phosphorylation enhances antiangiogenic activity. Post-translationally, N- and O-glycosylated. O-glycosylated with a core 1 or possibly core 8 glycan. In terms of tissue distribution, retinal pigment epithelial cells and blood plasma.

It localises to the secreted. Its subcellular location is the melanosome. Its function is as follows. Neurotrophic protein; induces extensive neuronal differentiation in retinoblastoma cells. Potent inhibitor of angiogenesis. As it does not undergo the S (stressed) to R (relaxed) conformational transition characteristic of active serpins, it exhibits no serine protease inhibitory activity. This Homo sapiens (Human) protein is Pigment epithelium-derived factor (SERPINF1).